The chain runs to 186 residues: Large ribosomal subunit protein uL22 (186 aa).

The interval 160–186 (AAENEPAKKKLSKKKLQRQKEKMMRNE) is disordered. Residues 177–186 (RQKEKMMRNE) are compositionally biased toward basic and acidic residues.

It belongs to the universal ribosomal protein uL22 family.

The chain is Large ribosomal subunit protein uL22 (RpL17) from Aedes aegypti (Yellowfever mosquito).